Consider the following 640-residue polypeptide: Protelomerase (640 aa).

Positions 275, 300, 383, and 416 each coordinate DNA. The active-site Nucleophile is Tyr-425. Over residues 545–585 (VDLDDENHDDETLDDDEIEVDESEGEELEEAGDAEEAEVAE) the composition is skewed to acidic residues. Positions 545–605 (VDLDDENHDD…FKAPRDNGDG (61 aa)) are disordered.

Belongs to the Caudoviricetes Protelomerase family. Monomer. Homodimer; in presence of DNA.

Converts the circular intermediates produced by the viral replication and carrying a joined telomere site to a linear DNA molecule with covalently closed hairpin ends. The viral circular DNA is cleaved at a palindromic site called telRL thereby generating a linear prophage plasmid with telomeres. Binds covalently to the 3'-phosphoryl of the cleaved strands. This Klebsiella oxytoca (Bacteriophage phiKO2) protein is Protelomerase.